The sequence spans 82 residues: Small ribosomal subunit protein uS15 (82 aa).

Belongs to the universal ribosomal protein uS15 family. As to quaternary structure, part of the 30S ribosomal subunit. Forms a bridge to the 50S subunit in the 70S ribosome, contacting the 23S rRNA.

In terms of biological role, one of the primary rRNA binding proteins, it binds directly to 16S rRNA where it helps nucleate assembly of the platform of the 30S subunit by binding and bridging several RNA helices of the 16S rRNA. Its function is as follows. Forms an intersubunit bridge (bridge B4) with the 23S rRNA of the 50S subunit in the ribosome. The protein is Small ribosomal subunit protein uS15 of Pelagibacter ubique (strain HTCC1062).